Here is a 483-residue protein sequence, read N- to C-terminus: Proline--tRNA ligase (483 aa).

The protein belongs to the class-II aminoacyl-tRNA synthetase family. ProS type 3 subfamily. In terms of assembly, homodimer.

The protein localises to the cytoplasm. The catalysed reaction is tRNA(Pro) + L-proline + ATP = L-prolyl-tRNA(Pro) + AMP + diphosphate. Catalyzes the attachment of proline to tRNA(Pro) in a two-step reaction: proline is first activated by ATP to form Pro-AMP and then transferred to the acceptor end of tRNA(Pro). This Sulfurisphaera tokodaii (strain DSM 16993 / JCM 10545 / NBRC 100140 / 7) (Sulfolobus tokodaii) protein is Proline--tRNA ligase.